A 269-amino-acid polypeptide reads, in one-letter code: Regulatory protein RecX (269 aa).

The protein belongs to the RecX family.

Its subcellular location is the cytoplasm. Modulates RecA activity. The sequence is that of Regulatory protein RecX from Listeria welshimeri serovar 6b (strain ATCC 35897 / DSM 20650 / CCUG 15529 / CIP 8149 / NCTC 11857 / SLCC 5334 / V8).